The following is a 295-amino-acid chain: Delta-1-pyrroline-5-carboxylate reductase apf3 (295 aa).

This sequence belongs to the pyrroline-5-carboxylate reductase family.

The protein operates within secondary metabolite biosynthesis. In terms of biological role, delta-1-pyrroline-5-carboxylate reductase; part of the gene cluster that mediates the biosynthesis of the cyclic tetrapeptide apicidin F (APF). The non-ribosomal peptide synthetase apf1 incorporates four different amino acids to produce apicidin F: L-phenylalanine, D-pipecolic acid (D-pip), N-methoxy-L-tryptophan and L-2-aminooctanedioic acid. L-Phenylalanine is the only proteinogenic amino acid directly used by apf1. The 3 other apf1 substrates are non-proteinogenic and have to be modified by other enzymes of the cluster. Lysine is converted to delta-1-pyrroline-5-carboxylate (P5C) which is reduced to L-pipecolic acid (L-pip) by apf3. L-pip is epimerized to D-pip, probably by apf1 activity, prior to incorporation. L-Tryptophan is N-oxidyzed by one of the cytochrome P450 monooxygenases (apf7 or apf8), and further methylated at the hydroxy group by the O-methyltransferase apf6 to yield N-methoxy-L-tryptophan. The synthesis of the fourth apf1 substrate is more complex. The fatty acid synthase apf5 is involved in the synthesis of the octanoic acid backbone of L-2-aminooctanedioic acid by fixing one acetyl-CoA unit and three malonyl-CoA units. Then one of the cytochrome P450 monooxygenases (apf7 or apf8) may oxidize this backbone to 2-oxooctanoic acid. The aminotransferase apf4 is predicted to catalyze the exchange of the keto group with an amino group. The next step would be the oxidation of 2-aminooctanoic acid by one of the cytochrome P450 monooxygenases (apf7 or apf8). The last step is the oxidation of 2-amino-8-hydroxyoctanoic acid to 2-aminooctanedioic acid is catalyzed by the FAD-dependent monooxygenase apf9. The polypeptide is Delta-1-pyrroline-5-carboxylate reductase apf3 (Gibberella fujikuroi (strain CBS 195.34 / IMI 58289 / NRRL A-6831) (Bakanae and foot rot disease fungus)).